Reading from the N-terminus, the 494-residue chain is Aspartyl/glutamyl-tRNA(Asn/Gln) amidotransferase subunit B (494 aa).

This sequence belongs to the GatB/GatE family. GatB subfamily. Heterotrimer of A, B and C subunits.

The enzyme catalyses L-glutamyl-tRNA(Gln) + L-glutamine + ATP + H2O = L-glutaminyl-tRNA(Gln) + L-glutamate + ADP + phosphate + H(+). It carries out the reaction L-aspartyl-tRNA(Asn) + L-glutamine + ATP + H2O = L-asparaginyl-tRNA(Asn) + L-glutamate + ADP + phosphate + 2 H(+). Its function is as follows. Allows the formation of correctly charged Asn-tRNA(Asn) or Gln-tRNA(Gln) through the transamidation of misacylated Asp-tRNA(Asn) or Glu-tRNA(Gln) in organisms which lack either or both of asparaginyl-tRNA or glutaminyl-tRNA synthetases. The reaction takes place in the presence of glutamine and ATP through an activated phospho-Asp-tRNA(Asn) or phospho-Glu-tRNA(Gln). The polypeptide is Aspartyl/glutamyl-tRNA(Asn/Gln) amidotransferase subunit B (Synechococcus sp. (strain CC9902)).